The chain runs to 239 residues: Ribosomal RNA small subunit methyltransferase G (239 aa).

Residues glycine 79, phenylalanine 84, alanine 130–glutamate 131, and arginine 149 contribute to the S-adenosyl-L-methionine site.

The protein belongs to the methyltransferase superfamily. RNA methyltransferase RsmG family.

It is found in the cytoplasm. Functionally, specifically methylates the N7 position of a guanine in 16S rRNA. In Lactobacillus delbrueckii subsp. bulgaricus (strain ATCC BAA-365 / Lb-18), this protein is Ribosomal RNA small subunit methyltransferase G.